The primary structure comprises 548 residues: Lysine--tRNA ligase (548 aa).

A 'HIGH' region motif is present at residues 43–51; sequence PSGVPHLGN. A 'KMSKS' region motif is present at residues 308 to 312; sequence PFSSS.

Belongs to the class-I aminoacyl-tRNA synthetase family.

It localises to the cytoplasm. The catalysed reaction is tRNA(Lys) + L-lysine + ATP = L-lysyl-tRNA(Lys) + AMP + diphosphate. The sequence is that of Lysine--tRNA ligase from Halobacterium salinarum (strain ATCC 700922 / JCM 11081 / NRC-1) (Halobacterium halobium).